The chain runs to 905 residues: Respiratory burst oxidase homolog protein B (905 aa).

Disordered stretches follow at residues 1–46 (MADL…KTAR) and 69–134 (EVRG…VRKR). Over 1–355 (MADLEAGMVA…MYFLEENWKR (355 aa)) the chain is Cytoplasmic. Polar residues predominate over residues 29–44 (IPNSGNLGSSNRSTKT). The span at 75–84 (EGGSGHGTGF) shows a compositional bias: gly residues. The span at 91 to 108 (SPSSKSGKLTSKLRQVTN) shows a compositional bias: polar residues. EF-hand-like regions lie at residues 172–180 (QVDGVLLRS) and 206–217 (RGIVKQVLTKDE). EF-hand domains follow at residues 229-264 (GFDN…SASA) and 273-308 (RADE…SPSE). Positions 242, 244, 246, 248, and 253 each coordinate Ca(2+). A helical membrane pass occupies residues 356–376 (SWVMTLWISICIALFIWKFIQ). Residues 377–440 (YRNRAVFGIM…FNDNINFHKV (64 aa)) are Extracellular-facing. The 157-residue stretch at 395–551 (GAAETLKFNM…HLFVIVYTLL (157 aa)) folds into the Ferric oxidoreductase domain. The helical transmembrane segment at 441–461 (IAAGVAVGVALHAGAHLTCDF) threads the bilayer. Over 462-496 (PRLLHASDAQYELMKPFFGEKRPPNYWWFVKGTEG) the chain is Cytoplasmic. A helical transmembrane segment spans residues 497 to 517 (WTGVVMVVLMAIAFTLAQPWF). At 518-539 (RRNKLKDSNPLKKMTGFNAFWF) the chain is on the extracellular side. Residues 540 to 560 (THHLFVIVYTLLFVHGTCLYL) form a helical membrane-spanning segment. Residues 561-568 (SRKWYKKT) lie on the Cytoplasmic side of the membrane. The helical transmembrane segment at 569–586 (TWMYLAVPVVLYVSERIL) threads the bilayer. In terms of domain architecture, FAD-binding FR-type spans 587–715 (RLFRSHDAVG…DGPYGAPAQD (129 aa)). The Extracellular portion of the chain corresponds to 587–717 (RLFRSHDAVG…PYGAPAQDYR (131 aa)). Residues 718–738 (EYDVLLLIGLGIGATPLISIV) form a helical membrane-spanning segment. The Cytoplasmic segment spans residues 739–905 (KDVLNHIQGE…TRFDFHKENF (167 aa)).

Belongs to the RBOH (TC 5.B.1.3) family. In terms of assembly, monomer and homodimer, stabilized by swapping the EF-hand motifs. Interacts with GTP-bound RAC1.

Its subcellular location is the membrane. Its function is as follows. Calcium-dependent NADPH oxidase that generates superoxide. This is Respiratory burst oxidase homolog protein B (RBOHB) from Oryza sativa subsp. japonica (Rice).